The chain runs to 293 residues: Extracellular metalloprotease MGYG_00389 (293 aa).

The N-terminal stretch at 1-19 is a signal peptide; the sequence is MRFSVFLPAIAALSSAVAA. N-linked (GlcNAc...) asparagine glycosylation is found at Asn-49 and Asn-53. His-184 serves as a coordination point for Zn(2+). Glu-185 is a catalytic residue. His-188 contacts Zn(2+). Cys-223 and Cys-249 are oxidised to a cystine. The segment at 270 to 293 is disordered; sequence GSGSGSVTRPRPKPPVLMDYEHRL.

This sequence belongs to the peptidase M43B family.

The protein resides in the secreted. Its function is as follows. Secreted metalloproteinase that allows assimilation of proteinaceous substrates. Plays a pivotal role as a pathogenicity determinant during infections and contributes to the ability of the pathogen to persist within the mammalian host. In Arthroderma gypseum (strain ATCC MYA-4604 / CBS 118893) (Microsporum gypseum), this protein is Extracellular metalloprotease MGYG_00389.